A 563-amino-acid chain; its full sequence is Proline--tRNA ligase (563 aa).

This sequence belongs to the class-II aminoacyl-tRNA synthetase family. ProS type 1 subfamily. As to quaternary structure, homodimer.

The protein localises to the cytoplasm. It carries out the reaction tRNA(Pro) + L-proline + ATP = L-prolyl-tRNA(Pro) + AMP + diphosphate. Functionally, catalyzes the attachment of proline to tRNA(Pro) in a two-step reaction: proline is first activated by ATP to form Pro-AMP and then transferred to the acceptor end of tRNA(Pro). As ProRS can inadvertently accommodate and process non-cognate amino acids such as alanine and cysteine, to avoid such errors it has two additional distinct editing activities against alanine. One activity is designated as 'pretransfer' editing and involves the tRNA(Pro)-independent hydrolysis of activated Ala-AMP. The other activity is designated 'posttransfer' editing and involves deacylation of mischarged Ala-tRNA(Pro). The misacylated Cys-tRNA(Pro) is not edited by ProRS. The chain is Proline--tRNA ligase from Persephonella marina (strain DSM 14350 / EX-H1).